Reading from the N-terminus, the 206-residue chain is Ribosomal RNA small subunit methyltransferase G (206 aa).

S-adenosyl-L-methionine contacts are provided by residues G74, L79, 125 to 126 (VE), and R140.

Belongs to the methyltransferase superfamily. RNA methyltransferase RsmG family.

It is found in the cytoplasm. The catalysed reaction is guanosine(527) in 16S rRNA + S-adenosyl-L-methionine = N(7)-methylguanosine(527) in 16S rRNA + S-adenosyl-L-homocysteine. Specifically methylates the N7 position of guanine in position 527 of 16S rRNA. This Shewanella frigidimarina (strain NCIMB 400) protein is Ribosomal RNA small subunit methyltransferase G.